We begin with the raw amino-acid sequence, 117 residues long: Small ribosomal subunit protein uS17 (117 aa).

Positions Ala97–Ala117 are disordered.

It belongs to the universal ribosomal protein uS17 family. In terms of assembly, part of the 30S ribosomal subunit.

In terms of biological role, one of the primary rRNA binding proteins, it binds specifically to the 5'-end of 16S ribosomal RNA. This is Small ribosomal subunit protein uS17 from Rhodopirellula baltica (strain DSM 10527 / NCIMB 13988 / SH1).